The following is a 216-amino-acid chain: MLEELLNGNIEKKTITQIYGPPGVGKTNICILSMLKAIENGKNVVYIDTEGSLSIERIKQLSEQDSDELLKSIIIYEPSSFEEQSEALEKIFFLENIGLIVIDGIVSLYRLELCDNINENTKLNRMLGKQISNLLKVARMKNSGILITNQVKDSINGIEPAGGRLLEYWSKSIIKLEKTESIRKLTLEKHRHAKEGENLRFRIVQNGLEIINKSYQ.

This sequence belongs to the eukaryotic RecA-like protein family. RadB subfamily.

Its function is as follows. Involved in DNA repair and in homologous recombination. May regulate the cleavage reactions of the branch-structured DNA. Has a very weak ATPase activity that is not stimulated by DNA. Binds DNA but does not promote DNA strands exchange. The protein is DNA repair and recombination protein RadB of Methanococcus maripaludis (strain C5 / ATCC BAA-1333).